The sequence spans 741 residues: Endoplasmic reticulum membrane sensor NFE2L1 (741 aa).

A helical; Signal-anchor for type II membrane protein membrane pass occupies residues 7–24 (YLTEGLLQFTILLSLIGV). Disordered regions lie at residues 108-148 (DPEG…TEQG) and 198-220 (QKEQ…WSGE). Residues 113–131 (VSGSQPNSGLALESSSGLQ) are compositionally biased toward polar residues. Residues 191-199 (VFDYSHRQK) form a cholesterol recognition/amino acid consensus (CRAC) region region. Positions 198 to 216 (QKEQDVDKELQDGREREDT) are enriched in basic and acidic residues. Residues Asn319 and Asn331 are each glycosylated (N-linked (GlcNAc...) asparagine). A CPD region spans residues 350-354 (SPEVE). N-linked (GlcNAc...) asparagine glycosylation is present at Asn394. 2 disordered regions span residues 441–501 (EEEF…DSET) and 551–582 (SALD…QMSR). Positions 447-451 (DSGLS) match the Destruction motif motif. Residues 447–492 (DSGLSLDSSHSPSSLSSSEGSSSSSSSSSSSSASSSASSSFSEEGA) are compositionally biased toward low complexity. At Ser497 the chain carries Phosphoserine; by CK2. Residues 567-582 (GSKEKQADFLDKQMSR) show a composition bias toward basic and acidic residues. Ser568 carries the phosphoserine modification. One can recognise a bZIP domain in the interval 623-686 (LIRDIRRRGK…RQMKQKVQSL (64 aa)). The segment at 625 to 644 (RDIRRRGKNKMAAQNCRKRK) is basic motif. The segment at 651-665 (LERDVEDLQRDKARL) is leucine-zipper. Residues 722–741 (RTMADQQARRQERKPKDRRK) form a disordered region. Positions 730–737 (RRQERKPK) match the Nuclear localization signal motif. Positions 732 to 741 (QERKPKDRRK) are enriched in basic residues.

The protein belongs to the bZIP family. CNC subfamily. As to quaternary structure, interacts with KEAP1. Interacts (via CPD region) with FBXW7; leading to its ubiquitination and degradation. Interacts with SYVN1/HRD1; leading to its ubiquitination and degradation. Interacts (when ubiquitinated) with DDI2; leading to its cleavage. In terms of assembly, interacts (via the bZIP domain) with small MAF protein (MAFF, MAFG or MAFK); required for binding to antioxidant response elements (AREs) on DNA. Interacts (via Destruction motif) with BTRC; leading to its ubiquitination and degradation. Interacts with CEBPB; the heterodimer represses expression of DSPP during odontoblast differentiation. Interacts with MOTS-c, a peptide produced by the mitochondrially encoded 12S rRNA MT-RNR1. Cleaved at Leu-104 by the aspartyl protease DDI2 following retrotranslocation, releasing the protein from the endoplasmic reticulum membrane and forming the transcription factor NRF1 that translocates into the nucleus. Ubiquitination is prerequisite for cleavage by aspartyl protease DDI2. Post-translationally, N-glycosylated in normal conditions, when it has a single-pass type II membrane protein topology, with the DNA-binding domain facing the endoplasmic reticulum lumen. Deglycosylated during retrotranslocation to the cytosolic side of the membrane, to have a single-pass type III membrane protein topology with the major part of the protein facing the cytosol. In terms of processing, ubiquitinated by the SCF(FBXW7) complex and SYVN1/HRD1, leading to its degradation by the proteasome. Ubiquitinated during retrotranslocation to the cytosolic side of the membrane: ubiquitination does not lead to degradation and is required for processing by the aspartyl protease DDI2 and subsequent release from the endoplasmic reticulum membrane. Phosphorylation by CK2 at Ser-497 inhibits transcription factor activity, possibly by affecting DNA-binding activity. Phosphorylation at Ser-568 is required for interaction with CEBPB. Post-translationally, ubiquitinated by the SCF(BTRC) complex in the nucleus, leading to its degradation by the proteasome. Isoform 1: Widely expressed including kidney, brown fat, white fat, large intestine, small intestine, stomach, lung, brain and liver. Isoform 1: Expressed in mouse embryonic fibroblasts (MEF). Isoform 2: Widely expressed including kidney, brown fat, white fat, large intestine, small intestine, stomach, lung, brain and liver. Isoform 2: levels in white fat, lung and liver are increased compared to isoform 1 (at protein level). Isoform 2: levels are elevated in brown fat and brain, but are reduced in liver compared to isoform 1 levels. Isoform 2: Expressed in mouse embryonic fibroblasts (MEF).

The protein resides in the endoplasmic reticulum membrane. It is found in the nucleus. The protein localises to the cytoplasm. In terms of biological role, endoplasmic reticulum membrane sensor that translocates into the nucleus in response to various stresses to act as a transcription factor. Constitutes a precursor of the transcription factor NRF1. Able to detect various cellular stresses, such as cholesterol excess, oxidative stress or proteasome inhibition. In response to stress, it is released from the endoplasmic reticulum membrane following cleavage by the protease DDI2 and translocates into the nucleus to form the transcription factor NRF1. Acts as a key sensor of cholesterol excess: in excess cholesterol conditions, the endoplasmic reticulum membrane form of the protein directly binds cholesterol via its CRAC motif, preventing cleavage and release of the transcription factor NRF1, thereby allowing expression of genes promoting cholesterol removal, such as CD36. Involved in proteasome homeostasis: in response to proteasome inhibition, it is released from the endoplasmic reticulum membrane, translocates to the nucleus and activates expression of genes encoding proteasome subunits. Its function is as follows. CNC-type bZIP family transcription factor that translocates to the nucleus and regulates expression of target genes in response to various stresses. Heterodimerizes with small-Maf proteins (MAFF, MAFG or MAFK) and binds DNA motifs including the antioxidant response elements (AREs), which regulate expression of genes involved in oxidative stress response. Activates or represses expression of target genes, depending on the context. Plays a key role in cholesterol homeostasis by acting as a sensor of cholesterol excess: in low cholesterol conditions, translocates into the nucleus and represses expression of genes involved in defense against cholesterol excess, such as CD36. In excess cholesterol conditions, the endoplasmic reticulum membrane form of the protein directly binds cholesterol via its CRAC motif, preventing cleavage and release of the transcription factor NRF1, thereby allowing expression of genes promoting cholesterol removal. Critical for redox balance in response to oxidative stress: acts by binding the AREs motifs on promoters and mediating activation of oxidative stress response genes, such as GCLC, GCLM, GSS, MT1 and MT2. Plays an essential role during fetal liver hematopoiesis: probably has a protective function against oxidative stress and is involved in lipid homeostasis in the liver. Involved in proteasome homeostasis: in response to proteasome inhibition, mediates the 'bounce-back' of proteasome subunits by translocating into the nucleus and activating expression of genes encoding proteasome subunits. Also involved in regulating glucose flux. Together with CEBPB; represses expression of DSPP during odontoblast differentiation. In response to ascorbic acid induction, activates expression of SP7/Osterix in osteoblasts. Transcription factor that binds the antioxidant response elements (ARE) consensus sequence on promoters and activates their expression. Functionally, transcription factor that binds the extended kappa 3 site of the TNF-alpha promoter after Fc gamma RIII stimulation and participates in the induction of this cytokine. In Mus musculus (Mouse), this protein is Endoplasmic reticulum membrane sensor NFE2L1.